A 236-amino-acid polypeptide reads, in one-letter code: Dolichol-phosphate mannosyltransferase (236 aa).

Pro9, Tyr11, Glu13, Ile40, Asp42, Asp95, Ala96, Asp97, Arg124, Val160, Arg211, and Lys217 together coordinate GDP-alpha-D-mannose. Asp97 is a binding site for Mg(2+). Asp97 lines the Mn(2+) pocket.

Belongs to the glycosyltransferase 2 family. Component of the dolichol-phosphate mannose (DPM) synthase complex composed of dpm1, dpm2 and dpm3. The cofactor is Mg(2+). It depends on Mn(2+) as a cofactor. Requires Ca(2+) as cofactor.

Its subcellular location is the endoplasmic reticulum. It carries out the reaction a di-trans,poly-cis-dolichyl phosphate + GDP-alpha-D-mannose = a di-trans,poly-cis-dolichyl beta-D-mannosyl phosphate + GDP. The protein operates within protein modification; protein glycosylation. Its function is as follows. Transfers mannose from GDP-mannose to dolichol monophosphate to form dolichol phosphate mannose (Dol-P-Man) which is the mannosyl donor in pathways leading to N-glycosylation, glycosyl phosphatidylinositol membrane anchoring, and O-mannosylation of proteins. This is Dolichol-phosphate mannosyltransferase from Schizosaccharomyces pombe (strain 972 / ATCC 24843) (Fission yeast).